The chain runs to 184 residues: Dirigent protein 13 (184 aa).

The N-terminal stretch at 1–25 is a signal peptide; sequence MANQIYIISLIFLSVLLYQSTTVLS. Cys36 and Cys182 form a disulfide bridge. 2 N-linked (GlcNAc...) asparagine glycosylation sites follow: Asn55 and Asn119.

Belongs to the plant dirigent protein family. As to quaternary structure, homodimer. Expressed in root vasculature and meristems, cotyledons, flowers, siliques, and leaf trichomes. Localized in the interfascicular/vascular cambia and developing xylem.

The protein localises to the secreted. Its subcellular location is the extracellular space. It localises to the apoplast. Dirigent proteins impart stereoselectivity on the phenoxy radical-coupling reaction, yielding optically active lignans from two molecules of coniferyl alcohol in the biosynthesis of lignans, flavonolignans, and alkaloids and thus plays a central role in plant secondary metabolism. The chain is Dirigent protein 13 (DIR13) from Arabidopsis thaliana (Mouse-ear cress).